A 145-amino-acid polypeptide reads, in one-letter code: MSKKEVIIYTDGACSGNPGAGGWAAIILFQDYRKDIYGREENTTNNKMELTAVINGLKVLKFSCNINLYTDSLYVKHGITEWINKWKMNGWKTSNKKSVKNMELWKELDNVASQHEIDWKWVKAHSGDKYNEEADSLARKAIIDA.

Residues 2 to 143 (SKKEVIIYTD…ADSLARKAII (142 aa)) enclose the RNase H type-1 domain. Asp-11, Glu-49, Asp-71, and Asp-135 together coordinate Mg(2+).

Belongs to the RNase H family. Monomer. Mg(2+) serves as cofactor.

The protein resides in the cytoplasm. It catalyses the reaction Endonucleolytic cleavage to 5'-phosphomonoester.. In terms of biological role, endonuclease that specifically degrades the RNA of RNA-DNA hybrids. The protein is Ribonuclease H of Wolbachia pipientis wMel.